The following is a 242-amino-acid chain: Lactate utilization protein A 2 (242 aa).

Belongs to the LutA/YkgE family.

Its function is as follows. Is involved in L-lactate degradation and allows cells to grow with lactate as the sole carbon source. The protein is Lactate utilization protein A 2 of Bacillus cereus (strain Q1).